The chain runs to 127 residues: Small ribosomal subunit protein eS8 (127 aa).

The protein belongs to the eukaryotic ribosomal protein eS8 family. Part of the 30S ribosomal subunit.

The chain is Small ribosomal subunit protein eS8 (rps8e) from Pyrococcus horikoshii (strain ATCC 700860 / DSM 12428 / JCM 9974 / NBRC 100139 / OT-3).